The primary structure comprises 60 residues: MAVPKRKKSKSRRNMHRSHHAIKPKNIVVCTTTGEFMLPHSIAVDGSYKGKRVFIKQQAE.

The interval 1-23 (MAVPKRKKSKSRRNMHRSHHAIK) is disordered.

Belongs to the bacterial ribosomal protein bL32 family.

This is Large ribosomal subunit protein bL32 from Wolbachia sp. subsp. Brugia malayi (strain TRS).